We begin with the raw amino-acid sequence, 588 residues long: Proline--tRNA ligase (588 aa).

Belongs to the class-II aminoacyl-tRNA synthetase family. ProS type 1 subfamily. Homodimer.

Its subcellular location is the cytoplasm. The enzyme catalyses tRNA(Pro) + L-proline + ATP = L-prolyl-tRNA(Pro) + AMP + diphosphate. Its function is as follows. Catalyzes the attachment of proline to tRNA(Pro) in a two-step reaction: proline is first activated by ATP to form Pro-AMP and then transferred to the acceptor end of tRNA(Pro). As ProRS can inadvertently accommodate and process non-cognate amino acids such as alanine and cysteine, to avoid such errors it has two additional distinct editing activities against alanine. One activity is designated as 'pretransfer' editing and involves the tRNA(Pro)-independent hydrolysis of activated Ala-AMP. The other activity is designated 'posttransfer' editing and involves deacylation of mischarged Ala-tRNA(Pro). The misacylated Cys-tRNA(Pro) is not edited by ProRS. The sequence is that of Proline--tRNA ligase from Corynebacterium glutamicum (strain R).